The chain runs to 434 residues: Methylenetetrahydrofolate--tRNA-(uracil-5-)-methyltransferase TrmFO (434 aa).

Residue 9–14 (GAGLAG) coordinates FAD.

This sequence belongs to the MnmG family. TrmFO subfamily. Requires FAD as cofactor.

It localises to the cytoplasm. The catalysed reaction is uridine(54) in tRNA + (6R)-5,10-methylene-5,6,7,8-tetrahydrofolate + NADH + H(+) = 5-methyluridine(54) in tRNA + (6S)-5,6,7,8-tetrahydrofolate + NAD(+). The enzyme catalyses uridine(54) in tRNA + (6R)-5,10-methylene-5,6,7,8-tetrahydrofolate + NADPH + H(+) = 5-methyluridine(54) in tRNA + (6S)-5,6,7,8-tetrahydrofolate + NADP(+). Its function is as follows. Catalyzes the folate-dependent formation of 5-methyl-uridine at position 54 (M-5-U54) in all tRNAs. In Listeria monocytogenes serotype 4b (strain F2365), this protein is Methylenetetrahydrofolate--tRNA-(uracil-5-)-methyltransferase TrmFO.